We begin with the raw amino-acid sequence, 154 residues long: Prefoldin subunit 2 (154 aa).

2 disordered regions span residues 1–20 (MADSSGRVGKSGGSGTGKGA) and 126–154 (LMGEDEKPAAKENSEGAGAKSSSAGVLVS). Residues 9 to 18 (GKSGGSGTGK) are compositionally biased toward gly residues. The segment covering 126 to 139 (LMGEDEKPAAKENS) has biased composition (basic and acidic residues). Residues 141 to 154 (GAGAKSSSAGVLVS) show a composition bias toward low complexity.

The protein belongs to the prefoldin subunit beta family. Heterohexamer of two PFD-alpha type and four PFD-beta type subunits. Component of the PAQosome complex which is responsible for the biogenesis of several protein complexes and which consists of R2TP complex members RUVBL1, RUVBL2, RPAP3 and PIH1D1, URI complex members PFDN2, PFDN6, PDRG1, UXT and URI1 as well as ASDURF, POLR2E and DNAAF10/WDR92. Interacts with URI1; the interaction is phosphorylation-dependent and occurs in a growth-dependent manner.

It is found in the nucleus. Its subcellular location is the cytoplasm. The protein resides in the mitochondrion. Functionally, binds specifically to cytosolic chaperonin (c-CPN) and transfers target proteins to it. Binds to nascent polypeptide chain and promotes folding in an environment in which there are many competing pathways for nonnative proteins. This is Prefoldin subunit 2 (Pfdn2) from Rattus norvegicus (Rat).